Consider the following 467-residue polypeptide: Uronate isomerase (467 aa).

It belongs to the metallo-dependent hydrolases superfamily. Uronate isomerase family.

It catalyses the reaction D-glucuronate = D-fructuronate. The enzyme catalyses aldehydo-D-galacturonate = keto-D-tagaturonate. It functions in the pathway carbohydrate metabolism; pentose and glucuronate interconversion. The chain is Uronate isomerase from Clostridium acetobutylicum (strain ATCC 824 / DSM 792 / JCM 1419 / IAM 19013 / LMG 5710 / NBRC 13948 / NRRL B-527 / VKM B-1787 / 2291 / W).